Reading from the N-terminus, the 428-residue chain is Tryptophan synthase beta chain (428 aa).

N6-(pyridoxal phosphate)lysine is present on Lys-92.

Belongs to the TrpB family. Tetramer of two alpha and two beta chains. Requires pyridoxal 5'-phosphate as cofactor.

It carries out the reaction (1S,2R)-1-C-(indol-3-yl)glycerol 3-phosphate + L-serine = D-glyceraldehyde 3-phosphate + L-tryptophan + H2O. The protein operates within amino-acid biosynthesis; L-tryptophan biosynthesis; L-tryptophan from chorismate: step 5/5. Its function is as follows. The beta subunit is responsible for the synthesis of L-tryptophan from indole and L-serine. The chain is Tryptophan synthase beta chain from Leptothrix cholodnii (strain ATCC 51168 / LMG 8142 / SP-6) (Leptothrix discophora (strain SP-6)).